The chain runs to 436 residues: 3-ketoacyl-CoA thiolase (436 aa).

Catalysis depends on Cys-99, which acts as the Acyl-thioester intermediate. Catalysis depends on proton acceptor residues His-392 and Cys-422.

The protein belongs to the thiolase-like superfamily. Thiolase family. Heterotetramer of two alpha chains (FadJ) and two beta chains (FadI).

The protein localises to the cytoplasm. It carries out the reaction an acyl-CoA + acetyl-CoA = a 3-oxoacyl-CoA + CoA. It functions in the pathway lipid metabolism; fatty acid beta-oxidation. In terms of biological role, catalyzes the final step of fatty acid oxidation in which acetyl-CoA is released and the CoA ester of a fatty acid two carbons shorter is formed. This Shewanella sp. (strain W3-18-1) protein is 3-ketoacyl-CoA thiolase.